The following is a 396-amino-acid chain: Small ribosomal subunit protein mS27 (396 aa).

This sequence belongs to the mitochondrion-specific ribosomal protein mS27 family. As to quaternary structure, component of the mitochondrial small ribosomal subunit (mt-SSU). Mature N.crassa 74S mitochondrial ribosomes consist of a small (37S) and a large (54S) subunit. The 37S small subunit contains a 16S ribosomal RNA (16S mt-rRNA) and 32 different proteins. The 54S large subunit contains a 23S rRNA (23S mt-rRNA) and 42 different proteins.

Its subcellular location is the mitochondrion. Component of the mitochondrial ribosome (mitoribosome), a dedicated translation machinery responsible for the synthesis of mitochondrial genome-encoded proteins, including at least some of the essential transmembrane subunits of the mitochondrial respiratory chain. The mitoribosomes are attached to the mitochondrial inner membrane and translation products are cotranslationally integrated into the membrane. The sequence is that of Small ribosomal subunit protein mS27 (mrp13) from Neurospora crassa (strain ATCC 24698 / 74-OR23-1A / CBS 708.71 / DSM 1257 / FGSC 987).